A 252-amino-acid polypeptide reads, in one-letter code: Triosephosphate isomerase (252 aa).

A substrate-binding site is contributed by Asn10–Lys12. The Electrophile role is filled by His96. The active-site Proton acceptor is Glu168. Substrate is bound by residues Gly174, Ser213, and Gly234–Gly235.

Belongs to the triosephosphate isomerase family. In terms of assembly, homodimer.

Its subcellular location is the cytoplasm. It carries out the reaction D-glyceraldehyde 3-phosphate = dihydroxyacetone phosphate. The protein operates within carbohydrate biosynthesis; gluconeogenesis. It participates in carbohydrate degradation; glycolysis; D-glyceraldehyde 3-phosphate from glycerone phosphate: step 1/1. Functionally, involved in the gluconeogenesis. Catalyzes stereospecifically the conversion of dihydroxyacetone phosphate (DHAP) to D-glyceraldehyde-3-phosphate (G3P). This Nitrosomonas europaea (strain ATCC 19718 / CIP 103999 / KCTC 2705 / NBRC 14298) protein is Triosephosphate isomerase.